The sequence spans 329 residues: 3-dehydroquinate synthase (329 aa).

Belongs to the archaeal-type DHQ synthase family.

The catalysed reaction is 2-amino-2,3,7-trideoxy-D-lyxo-hept-6-ulosonate + NAD(+) + H2O = 3-dehydroquinate + NH4(+) + NADH + H(+). In terms of biological role, catalyzes the oxidative deamination and cyclization of 2-amino-3,7-dideoxy-D-threo-hept-6-ulosonic acid (ADH) to yield 3-dehydroquinate (DHQ), which is fed into the canonical shikimic pathway of aromatic amino acid biosynthesis. This is 3-dehydroquinate synthase from Methanoregula boonei (strain DSM 21154 / JCM 14090 / 6A8).